The following is a 188-amino-acid chain: Accessory gene regulator protein B (188 aa).

4 consecutive transmembrane segments (helical) span residues 49 to 69 (LALL…FLTL), 104 to 126 (ISFQ…YAPA), 143 to 163 (IKSI…PPPY), and 166 to 186 (FVVY…SIKE).

The protein belongs to the AgrB family.

It localises to the cell membrane. Essential for the production of a quorum sensing system signal molecule, the autoinducing peptide (AIP). This quorum sensing system is responsible for the regulation of the expression of virulence factor genes. Involved in the proteolytic processing of AgrD, the precursor of AIP. In Staphylococcus intermedius, this protein is Accessory gene regulator protein B.